Reading from the N-terminus, the 326-residue chain is Vomeronasal type-1 receptor 100 (326 aa).

Over 1–32 (MSEFPFFSPQPLFSYMMNKNSRVHTDSNIRNT) the chain is Extracellular. A helical transmembrane segment spans residues 33 to 53 (FFTEIGIGILANSFLLLFHIF). The Cytoplasmic segment spans residues 54-70 (KFIRGQRSRLTDLPIGL). Residues 71–91 (LSLIHLLMLLMGAFIAIDIFI) traverse the membrane as a helical segment. Over 92-104 (SWRGWDDIICKFL) the chain is Extracellular. Cys101 and Cys188 are oxidised to a cystine. Residues 105–127 (VYLYRSFRGLSLCTTCMLSVLQA) traverse the membrane as a helical segment. The Cytoplasmic portion of the chain corresponds to 128-149 (ITLSPRSSCLAKFKHKSPHHVS). Residues 150–170 (CAIISLSILYMFISSHLLVSI) form a helical membrane-spanning segment. The Extracellular segment spans residues 171-209 (NATPNLTTNNFMQVTQSCYIIPLSYLMQSMFSTLLAIRD). An N-linked (GlcNAc...) asparagine glycan is attached at Asn175. A helical transmembrane segment spans residues 210–230 (ISLISLMVLSTCYMVVLLCRH). Residues 231–254 (RNQIQHLQGTNLSPKASPEQRATQ) lie on the Cytoplasmic side of the membrane. The chain crosses the membrane as a helical span at residues 255–275 (TILMLMTFFVLMSIFDSIVSC). Residues 276–285 (SRTMYLNDPT) are Extracellular-facing. A helical membrane pass occupies residues 286–306 (SYYIQIFVVYIYATVSPFVFM). Residues 307-326 (STEKHIVNFLKSMCVRVKNV) are Cytoplasmic-facing.

This sequence belongs to the G-protein coupled receptor 1 family. Expressed in 1-4% of neurons of the vomeronasal organ. Only one pheromone receptor gene may be expressed in a particular neuron. Not expressed in the main olfactory epithelium.

The protein resides in the cell membrane. Its function is as follows. Putative pheromone receptor implicated in the regulation of social as well as reproductive behavior. In Rattus norvegicus (Rat), this protein is Vomeronasal type-1 receptor 100 (Vom1r100).